The chain runs to 103 residues: Conantokin-Br (103 aa).

The signal sequence occupies residues 1–21 (MQLYTYLYLLVPLVTFHLILG). The propeptide occupies 22–79 (TGTLDHGGALTERRSTDATALKPEPVLQKSAARSTDDNGKDRLTQMKRILKKRGKNAR). The interval 34–64 (RRSTDATALKPEPVLQKSAARSTDDNGKDRL) is disordered. A compositionally biased stretch (basic and acidic residues) spans 55–64 (STDDNGKDRL). 4-carboxyglutamate is present on residues Glu-82, Glu-83, Glu-89, and Glu-93. 2 residues coordinate a divalent metal cation: Glu-89 and Glu-93.

Belongs to the conotoxin B superfamily. It depends on Ca(2+) as a cofactor. Mg(2+) is required as a cofactor. As to expression, expressed by the venom duct.

The protein resides in the secreted. In terms of biological role, conantokins inhibit N-methyl-D-aspartate (NMDA) receptors. This toxin inhibits NR2 subunits N-methyl-D-aspartate (NMDA) receptor-mediated calcium influx in central nervous system neurons in the following order of preference: NR2B/GRIN2B (IC(50)=0.14 uM), NR2D/GRIN2D (IC(50)=0.31 uM), NR2A/GRIN2A (IC(50)=0.68 uM) and NR2C/GRIN2A (IC(50)=4.9 uM), when tested on rat receptors. In Conus sulcatus (Sulcate cone), this protein is Conantokin-Br.